The following is a 1407-amino-acid chain: DNA-directed RNA polymerase subunit beta' (1407 aa).

Zn(2+) contacts are provided by C70, C72, C85, and C88. Positions 460, 462, and 464 each coordinate Mg(2+). C814, C888, C895, and C898 together coordinate Zn(2+). N6-acetyllysine is present on K972.

The protein belongs to the RNA polymerase beta' chain family. As to quaternary structure, the RNAP catalytic core consists of 2 alpha, 1 beta, 1 beta' and 1 omega subunit. When a sigma factor is associated with the core the holoenzyme is formed, which can initiate transcription. It depends on Mg(2+) as a cofactor. Zn(2+) serves as cofactor.

The enzyme catalyses RNA(n) + a ribonucleoside 5'-triphosphate = RNA(n+1) + diphosphate. Functionally, DNA-dependent RNA polymerase catalyzes the transcription of DNA into RNA using the four ribonucleoside triphosphates as substrates. The polypeptide is DNA-directed RNA polymerase subunit beta' (Shigella dysenteriae serotype 1 (strain Sd197)).